The primary structure comprises 211 residues: Proteasome subunit beta 1 (211 aa).

Residues 1-17 (MVIMGNELQLENKILKG) constitute a propeptide, removed in mature form; by autocatalysis. The Nucleophile role is filled by T18.

The protein belongs to the peptidase T1B family. The 20S proteasome core is composed of 14 alpha and 14 beta subunits that assemble into four stacked heptameric rings, resulting in a barrel-shaped structure. The two inner rings, each composed of seven catalytic beta subunits, are sandwiched by two outer rings, each composed of seven alpha subunits. The catalytic chamber with the active sites is on the inside of the barrel. Has a gated structure, the ends of the cylinder being occluded by the N-termini of the alpha-subunits. Is capped at one or both ends by the proteasome regulatory ATPase, PAN.

The protein localises to the cytoplasm. It carries out the reaction Cleavage of peptide bonds with very broad specificity.. With respect to regulation, the formation of the proteasomal ATPase PAN-20S proteasome complex, via the docking of the C-termini of PAN into the intersubunit pockets in the alpha-rings, triggers opening of the gate for substrate entry. Interconversion between the open-gate and close-gate conformations leads to a dynamic regulation of the 20S proteasome proteolysis activity. In terms of biological role, component of the proteasome core, a large protease complex with broad specificity involved in protein degradation. The protein is Proteasome subunit beta 1 of Saccharolobus islandicus (strain M.16.27) (Sulfolobus islandicus).